Reading from the N-terminus, the 100-residue chain is Small ribosomal subunit protein uS14c (100 aa).

The protein belongs to the universal ribosomal protein uS14 family. In terms of assembly, part of the 30S ribosomal subunit.

Its subcellular location is the plastid. The protein localises to the chloroplast. Binds 16S rRNA, required for the assembly of 30S particles. The protein is Small ribosomal subunit protein uS14c of Draba nemorosa (Woodland whitlowgrass).